The following is a 383-amino-acid chain: tRNA-specific 2-thiouridylase MnmA (383 aa).

Residues 30-37 (GMSGGVDS) and methionine 56 contribute to the ATP site. The tract at residues 116–118 (NPD) is interaction with target base in tRNA. The Nucleophile role is filled by cysteine 121. Cysteines 121 and 218 form a disulfide. Residue glycine 146 coordinates ATP. The interval 168–170 (KDQ) is interaction with tRNA. Cysteine 218 (cysteine persulfide intermediate) is an active-site residue. Residues 330-331 (RY) are interaction with tRNA.

This sequence belongs to the MnmA/TRMU family.

The protein localises to the cytoplasm. The catalysed reaction is S-sulfanyl-L-cysteinyl-[protein] + uridine(34) in tRNA + AH2 + ATP = 2-thiouridine(34) in tRNA + L-cysteinyl-[protein] + A + AMP + diphosphate + H(+). Its function is as follows. Catalyzes the 2-thiolation of uridine at the wobble position (U34) of tRNA, leading to the formation of s(2)U34. The protein is tRNA-specific 2-thiouridylase MnmA of Haemophilus influenzae (strain ATCC 51907 / DSM 11121 / KW20 / Rd).